A 408-amino-acid polypeptide reads, in one-letter code: 4-hydroxy-3-methylbut-2-en-1-yl diphosphate synthase (ferredoxin) (408 aa).

Residues 1–21 show a composition bias toward polar residues; sequence MQTLPTPTTSSNTANQSTFDT. The segment at 1–26 is disordered; sequence MQTLPTPTTSSNTANQSTFDTTIKRR. [4Fe-4S] cluster is bound by residues Cys-317, Cys-320, Cys-351, and Glu-358.

The protein belongs to the IspG family. The cofactor is [4Fe-4S] cluster.

The enzyme catalyses (2E)-4-hydroxy-3-methylbut-2-enyl diphosphate + 2 oxidized [2Fe-2S]-[ferredoxin] + H2O = 2-C-methyl-D-erythritol 2,4-cyclic diphosphate + 2 reduced [2Fe-2S]-[ferredoxin] + H(+). It functions in the pathway isoprenoid biosynthesis; isopentenyl diphosphate biosynthesis via DXP pathway; isopentenyl diphosphate from 1-deoxy-D-xylulose 5-phosphate: step 5/6. Converts 2C-methyl-D-erythritol 2,4-cyclodiphosphate (ME-2,4cPP) into 1-hydroxy-2-methyl-2-(E)-butenyl 4-diphosphate. The protein is 4-hydroxy-3-methylbut-2-en-1-yl diphosphate synthase (ferredoxin) of Trichormus variabilis (strain ATCC 29413 / PCC 7937) (Anabaena variabilis).